Consider the following 188-residue polypeptide: UPF0200 protein YG5714_1176 (188 aa).

15–22 (GMPGSGKS) contributes to the ATP binding site.

The protein belongs to the UPF0200 family.

The chain is UPF0200 protein YG5714_1176 from Saccharolobus islandicus (strain Y.G.57.14 / Yellowstone #1) (Sulfolobus islandicus).